The following is a 200-amino-acid chain: ATP-dependent Clp protease proteolytic subunit 2 (200 aa).

Ser-101 (nucleophile) is an active-site residue. The active site involves His-126.

It belongs to the peptidase S14 family. As to quaternary structure, fourteen ClpP subunits assemble into 2 heptameric rings which stack back to back to give a disk-like structure with a central cavity, resembling the structure of eukaryotic proteasomes.

The protein resides in the cytoplasm. The catalysed reaction is Hydrolysis of proteins to small peptides in the presence of ATP and magnesium. alpha-casein is the usual test substrate. In the absence of ATP, only oligopeptides shorter than five residues are hydrolyzed (such as succinyl-Leu-Tyr-|-NHMec, and Leu-Tyr-Leu-|-Tyr-Trp, in which cleavage of the -Tyr-|-Leu- and -Tyr-|-Trp bonds also occurs).. Its function is as follows. Cleaves peptides in various proteins in a process that requires ATP hydrolysis. Has a chymotrypsin-like activity. Plays a major role in the degradation of misfolded proteins. This is ATP-dependent Clp protease proteolytic subunit 2 from Prochlorococcus marinus (strain MIT 9313).